The following is a 291-amino-acid chain: ATP synthase gamma chain (291 aa).

It belongs to the ATPase gamma chain family. F-type ATPases have 2 components, CF(1) - the catalytic core - and CF(0) - the membrane proton channel. CF(1) has five subunits: alpha(3), beta(3), gamma(1), delta(1), epsilon(1). CF(0) has three main subunits: a, b and c.

The protein localises to the cell inner membrane. Produces ATP from ADP in the presence of a proton gradient across the membrane. The gamma chain is believed to be important in regulating ATPase activity and the flow of protons through the CF(0) complex. This chain is ATP synthase gamma chain, found in Burkholderia lata (strain ATCC 17760 / DSM 23089 / LMG 22485 / NCIMB 9086 / R18194 / 383).